The chain runs to 86 residues: Cyclin-dependent kinase inhibitor 6 (86 aa).

Residues Met-1 to Ala-15 are compositionally biased toward low complexity. Residues Met-1–Gly-23 are disordered.

Belongs to the CDI family. ICK/KRP subfamily.

In Oryza sativa subsp. japonica (Rice), this protein is Cyclin-dependent kinase inhibitor 6 (KRP6).